The sequence spans 265 residues: Transglycosylase (265 aa).

The tract at residues 19–98 (NLDPRLVAGV…NTALLAYHGG (80 aa)) is slt-type domain. The active site involves glutamate 32. A helical transmembrane segment spans residues 219 to 239 (LRGVVIIAAVAIVVVGLYFLF).

Belongs to the transglycosylase Slt family. In terms of assembly, heteromultimer composed of proteins P7 and P14.

The protein resides in the virion membrane. It carries out the reaction Exolytic cleavage of the (1-&gt;4)-beta-glycosidic linkage between N-acetylmuramic acid (MurNAc) and N-acetylglucosamine (GlcNAc) residues in peptidoglycan, from either the reducing or the non-reducing ends of the peptidoglycan chains, with concomitant formation of a 1,6-anhydrobond in the MurNAc residue.. Its function is as follows. Component of the phage ejection machinery which acts as an exolysin. Muralytic protein involved in host peptidoglycan digestion necessary for viral DNA entry into the host cell. In terms of biological role, does not display any enzymatic activity. Required for DNA injection in the membrane transformation event. Involved in the formation of the membrane tail tube to connect the virus interior with the host cytosol. Essential for viral infectivity. This Acinetobacter calcoaceticus (Arthrobacter siderocapsulatus) protein is Transglycosylase (VII).